The following is a 276-amino-acid chain: Putative E3 ubiquitin-protein ligase SINA-like 9 (276 aa).

Residues 38–74 (CPICCEALTSPIFQCDNGHLACGSCCPKLSNKCPACT) form an RING-type zinc finger. Residues 88–274 (VLESILIPCP…MQVFIIENVD (187 aa)) form an SBD region. The segment at 91–149 (SILIPCPNVRFGCTKSFFYGKESAHEKECIFSQCSCPSSVCDYTGSYKDLYAHYKLTHS) adopts an SIAH-type zinc-finger fold. Cysteine 96, cysteine 103, histidine 115, cysteine 119, cysteine 126, cysteine 131, histidine 143, and histidine 148 together coordinate Zn(2+).

Belongs to the SINA (Seven in absentia) family.

It carries out the reaction S-ubiquitinyl-[E2 ubiquitin-conjugating enzyme]-L-cysteine + [acceptor protein]-L-lysine = [E2 ubiquitin-conjugating enzyme]-L-cysteine + N(6)-ubiquitinyl-[acceptor protein]-L-lysine.. Its pathway is protein modification; protein ubiquitination. E3 ubiquitin-protein ligase that mediates ubiquitination and subsequent proteasomal degradation of target proteins. E3 ubiquitin ligases accept ubiquitin from an E2 ubiquitin-conjugating enzyme in the form of a thioester and then directly transfers the ubiquitin to targeted substrates. It probably triggers the ubiquitin-mediated degradation of different substrates. The protein is Putative E3 ubiquitin-protein ligase SINA-like 9 of Arabidopsis thaliana (Mouse-ear cress).